The chain runs to 726 residues: Peroxisomal fatty acid beta-oxidation multifunctional protein (726 aa).

It in the N-terminal section; belongs to the enoyl-CoA hydratase/isomerase family. In the central section; belongs to the 3-hydroxyacyl-CoA dehydrogenase family. Monomer.

Its subcellular location is the peroxisome. It localises to the cytoplasm. The protein localises to the cytoskeleton. It catalyses the reaction a (3S)-3-hydroxyacyl-CoA = a (2E)-enoyl-CoA + H2O. The enzyme catalyses a 4-saturated-(3S)-3-hydroxyacyl-CoA = a (3E)-enoyl-CoA + H2O. It carries out the reaction a (3Z)-enoyl-CoA = a 4-saturated (2E)-enoyl-CoA. The catalysed reaction is a (3E)-enoyl-CoA = a 4-saturated (2E)-enoyl-CoA. It catalyses the reaction (3S)-3-hydroxybutanoyl-CoA = (3R)-3-hydroxybutanoyl-CoA. The enzyme catalyses a (3S)-3-hydroxyacyl-CoA + NAD(+) = a 3-oxoacyl-CoA + NADH + H(+). It functions in the pathway lipid metabolism; fatty acid beta-oxidation. Functionally, multifunctional enzyme involved in fatty acid beta-oxidation. Also binds to RNA and microtubules. Possible role in subcellular mRNA localization and RNA-cytoskeleton interactions. This chain is Peroxisomal fatty acid beta-oxidation multifunctional protein (MFP), found in Oryza sativa subsp. japonica (Rice).